The chain runs to 341 residues: Phenylalanine--tRNA ligase alpha subunit (341 aa).

Residue E252 coordinates Mg(2+).

This sequence belongs to the class-II aminoacyl-tRNA synthetase family. Phe-tRNA synthetase alpha subunit type 1 subfamily. In terms of assembly, tetramer of two alpha and two beta subunits. The cofactor is Mg(2+).

The protein localises to the cytoplasm. It catalyses the reaction tRNA(Phe) + L-phenylalanine + ATP = L-phenylalanyl-tRNA(Phe) + AMP + diphosphate + H(+). This Malacoplasma penetrans (strain HF-2) (Mycoplasma penetrans) protein is Phenylalanine--tRNA ligase alpha subunit.